The sequence spans 549 residues: Glucose-6-phosphate isomerase (549 aa).

Residue Glu-355 is the Proton donor of the active site. Catalysis depends on residues His-386 and Lys-514.

Belongs to the GPI family.

The protein localises to the cytoplasm. It catalyses the reaction alpha-D-glucose 6-phosphate = beta-D-fructose 6-phosphate. The protein operates within carbohydrate biosynthesis; gluconeogenesis. Its pathway is carbohydrate degradation; glycolysis; D-glyceraldehyde 3-phosphate and glycerone phosphate from D-glucose: step 2/4. In terms of biological role, catalyzes the reversible isomerization of glucose-6-phosphate to fructose-6-phosphate. The polypeptide is Glucose-6-phosphate isomerase (Klebsiella pneumoniae subsp. pneumoniae (strain ATCC 700721 / MGH 78578)).